Here is a 132-residue protein sequence, read N- to C-terminus: Large ribosomal subunit protein bL12 (132 aa).

Belongs to the bacterial ribosomal protein bL12 family. As to quaternary structure, homodimer. Part of the ribosomal stalk of the 50S ribosomal subunit. Forms a multimeric L10(L12)X complex, where L10 forms an elongated spine to which 2 to 4 L12 dimers bind in a sequential fashion. Binds GTP-bound translation factors.

Forms part of the ribosomal stalk which helps the ribosome interact with GTP-bound translation factors. Is thus essential for accurate translation. This Ehrlichia canis (strain Jake) protein is Large ribosomal subunit protein bL12.